Here is a 137-residue protein sequence, read N- to C-terminus: Small ribosomal subunit protein uS11 (137 aa).

The disordered stretch occupies residues 116-137 (EDVTPIPHDGTRRPGGKRGRRV).

Belongs to the universal ribosomal protein uS11 family. As to quaternary structure, part of the 30S ribosomal subunit.

Its function is as follows. Located on the platform of the 30S subunit. This Methanopyrus kandleri (strain AV19 / DSM 6324 / JCM 9639 / NBRC 100938) protein is Small ribosomal subunit protein uS11.